A 588-amino-acid polypeptide reads, in one-letter code: MRSIYCGQVNEAHAGQTITLCGWVHRRRDLGGLIFIDMRDREGIVQVFFDPDKPDAFALASELRGEFCIQVSGVVRTRPDSQRNSDMATGAIEVFAHELTIINRAEPLPLDFNQVNSEEQRLKFRYLDLRRPEMAKYLKTRAKASAFVRRFMDEHGFLDIETPMLTKATPEGARDYLVPSRVHKGKFYALPQSPQLFKQLLMMSGFDRYYQIVKCFRDEDLRADRQPEFTQIDVETSFMTAPQVRELMEEMIRNLWQHVLAVDLGDFPVMTFDEAMRRFGSDKPDLRLPMELVDVADLLTAVEFAVFAGPANDPKGRVAALKVPGGAELSRKQIDEYTKFVGIYGAKGLAWMKVNEAANGIEGVQSPVAKFLSDEIVREILARTGAADGDIIFFGADSKKVVADAIGALRLKVGRDLGLMENSWKPLWVIDFPMFEEDSEGGLAAMHHPFTAPSNLGPSELKANPLSAYANAYDMVINGYEVGGGSVRIHNSEMQATVFDILGITPAEQRLKFGFLLDALKYGTPPHAGLAFGLDRLSMLLTGTDNIRDVIAFPKTTAAACLMTDAPSFANQAQMSELAIATTVKGDE.

Glu-171 lines the L-aspartate pocket. The tract at residues 195 to 198 is aspartate; that stretch reads QLFK. Arg-217 lines the L-aspartate pocket. Residues 217-219 and Gln-226 each bind ATP; that span reads RDE. His-447 is an L-aspartate binding site. Glu-481 lines the ATP pocket. Arg-488 is a binding site for L-aspartate. 533–536 lines the ATP pocket; the sequence is GLDR.

Belongs to the class-II aminoacyl-tRNA synthetase family. Type 1 subfamily. Homodimer.

It is found in the cytoplasm. The catalysed reaction is tRNA(Asp) + L-aspartate + ATP = L-aspartyl-tRNA(Asp) + AMP + diphosphate. Its function is as follows. Catalyzes the attachment of L-aspartate to tRNA(Asp) in a two-step reaction: L-aspartate is first activated by ATP to form Asp-AMP and then transferred to the acceptor end of tRNA(Asp). In Aeromonas salmonicida (strain A449), this protein is Aspartate--tRNA ligase.